Here is a 205-residue protein sequence, read N- to C-terminus: Ras-related protein RABD1 (205 aa).

N-acetylserine is present on Ser-2. Residues 15 to 23 (GDSSVGKSC), 33 to 40 (YIDSYIST), 63 to 67 (DTAGQ), 121 to 124 (NKND), and 151 to 153 (SAK) each bind GTP. Positions 37-45 (YISTIGVDF) match the Effector region motif. Polar residues-rich tracts occupy residues 174–186 (GSQT…SGPG) and 194–205 (PIQQNNGGCCGQ). The tract at residues 174-205 (GSQTNANKTSGPGTVQMKGQPIQQNNGGCCGQ) is disordered. 2 S-geranylgeranyl cysteine lipidation sites follow: Cys-202 and Cys-203.

Belongs to the small GTPase superfamily. Rab family. As to quaternary structure, does not interact with GC5. Interacts with XI-2/MYA2.

Its subcellular location is the golgi apparatus. It is found in the trans-Golgi network membrane. The protein resides in the golgi apparatus membrane. Protein transport. Regulator of membrane traffic from the Golgi apparatus towards the endoplasmic reticulum (ER). The chain is Ras-related protein RABD1 (RABD1) from Arabidopsis thaliana (Mouse-ear cress).